The sequence spans 643 residues: UvrABC system protein C (643 aa).

The GIY-YIG domain occupies Ala-25–Val-104. Residues Ser-214–Leu-249 form the UVR domain.

Belongs to the UvrC family. As to quaternary structure, interacts with UvrB in an incision complex.

It localises to the cytoplasm. Its function is as follows. The UvrABC repair system catalyzes the recognition and processing of DNA lesions. UvrC both incises the 5' and 3' sides of the lesion. The N-terminal half is responsible for the 3' incision and the C-terminal half is responsible for the 5' incision. The chain is UvrABC system protein C from Synechococcus elongatus (strain ATCC 33912 / PCC 7942 / FACHB-805) (Anacystis nidulans R2).